Consider the following 860-residue polypeptide: Beta-glucosidase A (860 aa).

A signal peptide spans Met1 to Ala19. Residues Asn61, Asn211, and Asn252 are each glycosylated (N-linked (GlcNAc...) asparagine). Asp280 is a catalytic residue. N-linked (GlcNAc...) asparagine glycosylation is found at Asn315, Asn322, Asn354, Asn387, Asn442, Asn523, Asn542, Asn564, Asn658, Asn690, and Asn712. The segment at Ser719–Gly753 is disordered.

The protein belongs to the glycosyl hydrolase 3 family.

Its subcellular location is the secreted. It carries out the reaction Hydrolysis of terminal, non-reducing beta-D-glucosyl residues with release of beta-D-glucose.. Its pathway is glycan metabolism; cellulose degradation. In terms of biological role, beta-glucosidases are one of a number of cellulolytic enzymes involved in the degradation of cellulosic biomass. Catalyzes the last step releasing glucose from the inhibitory cellobiose. The protein is Beta-glucosidase A (bglA) of Aspergillus kawachii (strain NBRC 4308) (White koji mold).